Consider the following 331-residue polypeptide: Tyrosine--tRNA ligase (331 aa).

L-tyrosine contacts are provided by tyrosine 31, tyrosine 155, glutamine 159, aspartate 162, and glutamine 177. Residues 218 to 222 (KMSKS) carry the 'KMSKS' region motif. Lysine 221 lines the ATP pocket.

It belongs to the class-I aminoacyl-tRNA synthetase family. TyrS type 4 subfamily. In terms of assembly, homodimer.

The protein localises to the cytoplasm. The enzyme catalyses tRNA(Tyr) + L-tyrosine + ATP = L-tyrosyl-tRNA(Tyr) + AMP + diphosphate + H(+). In terms of biological role, catalyzes the attachment of tyrosine to tRNA(Tyr) in a two-step reaction: tyrosine is first activated by ATP to form Tyr-AMP and then transferred to the acceptor end of tRNA(Tyr). The chain is Tyrosine--tRNA ligase from Thermoplasma volcanium (strain ATCC 51530 / DSM 4299 / JCM 9571 / NBRC 15438 / GSS1).